The chain runs to 508 residues: MSNKEIEDNEDVWKERCMNCIRCNDEKNCGTCWPCRNGKTCDMRKCFSAKRLYNEKVKRQTDENLKAIMAKTAQREAAHQAATTTAPSAPVVIEQQVEKKKRGRKKGSGNGGAAAAAQQRKANIINERDYVPNRPTRQQSADLRRKRTQLNAEPDKHPRQCLNPNCIYESRIDSKYCSDECGKELARMRLTEILPNRCKQYFFEGPSGGPRSLEDEIKPKRAKINREVQKLTESEKNMMAFLNKLVEFIKTQLKLQPLGTEERYDDNLYEGCIVCGLPDIPLLKYTKHIELCWARSEKAISFGAPEKNNDMFYCEKYDSRTNSFCKRLKSLCPEHRKLGDEQHLKVCGYPKKWEDGMIETAKTVSELIEMEDPFGEEGCRTKKDACHKHHKWIPSLRGTIELEQACLFQKMYELCHEMHKLNAHAEWTTNALSIMMHKQPNIIDSEQMSLFNKSQSTSSSASAHGATTPISSTSSSSSSSSKNDDEMEDTAEFLANLAVQKEEETQNN.

A CXXC-type zinc finger spans residues 10–47; sequence EDVWKERCMNCIRCNDEKNCGTCWPCRNGKTCDMRKCF. Disordered stretches follow at residues 95-156 and 453-508; these read QQVE…EPDK and KSQS…TQNN. 2 stretches are compositionally biased toward low complexity: residues 113-123 and 454-481; these read AAAAAQQRKAN and SQST…SSSS.

As to quaternary structure, component of the SET2 complex (also known as the SET1/COMPASS complex), which contains at least set-2, swd-2.1, cfp-1, rbbp-5, wdr-5.1, dpy-30 and ash-2. Within the complex, interacts with wdr-5.1, ash-2 and dpy-30. Also interacts with the SIN3S complex, which contains at least sin-3, hda-1, athp-1 and mrg-1. Interacts with sin-3, hda-1 and mrg-1.

It is found in the nucleus. Its function is as follows. Transcriptional activator that exhibits a unique DNA binding specificity for CpG motifs; enriched at promoters containing the trimethylation mark on histone H3 'Lys-4' (H3K4me3). Forms part of the SET2 complex and interacts with the SIN3S HDAC complex at promoters. Required for H3K4 trimethylation and plays a repressive role in the expression of heat shock and salt-inducible genes. Required for fertility, in cooperation with class I histone deacetylases (HDACs). The chain is CXXC-type zinc finger protein 1 from Caenorhabditis elegans.